A 466-amino-acid polypeptide reads, in one-letter code: Asparagine--tRNA ligase (466 aa).

It belongs to the class-II aminoacyl-tRNA synthetase family. Homodimer.

Its subcellular location is the cytoplasm. It catalyses the reaction tRNA(Asn) + L-asparagine + ATP = L-asparaginyl-tRNA(Asn) + AMP + diphosphate + H(+). The chain is Asparagine--tRNA ligase from Idiomarina loihiensis (strain ATCC BAA-735 / DSM 15497 / L2-TR).